The chain runs to 530 residues: Ubiquitin carboxyl-terminal hydrolase 17-like protein 1 (530 aa).

A USP domain is found at Ala-80 to Lys-375. Cys-89 acts as the Nucleophile in catalysis. His-334 (proton acceptor) is an active-site residue. Composition is skewed to basic and acidic residues over residues Ser-382 to Arg-392 and Asp-398 to Asp-411. A disordered region spans residues Ser-382–Asp-411.

It belongs to the peptidase C19 family. USP17 subfamily.

It is found in the nucleus. It localises to the endoplasmic reticulum. The enzyme catalyses Thiol-dependent hydrolysis of ester, thioester, amide, peptide and isopeptide bonds formed by the C-terminal Gly of ubiquitin (a 76-residue protein attached to proteins as an intracellular targeting signal).. In terms of biological role, deubiquitinating enzyme that removes conjugated ubiquitin from specific proteins to regulate different cellular processes that may include cell proliferation, progression through the cell cycle, apoptosis, cell migration, and the cellular response to viral infection. This is Ubiquitin carboxyl-terminal hydrolase 17-like protein 1 (USP17L1) from Homo sapiens (Human).